A 329-amino-acid chain; its full sequence is tRNA-modifying protein YgfZ (329 aa).

Residues Trp28 and Trp188 each contribute to the folate site.

This sequence belongs to the tRNA-modifying YgfZ family.

It is found in the cytoplasm. Its function is as follows. Folate-binding protein involved in regulating the level of ATP-DnaA and in the modification of some tRNAs. It is probably a key factor in regulatory networks that act via tRNA modification, such as initiation of chromosomal replication. This is tRNA-modifying protein YgfZ from Photorhabdus laumondii subsp. laumondii (strain DSM 15139 / CIP 105565 / TT01) (Photorhabdus luminescens subsp. laumondii).